Here is a 207-residue protein sequence, read N- to C-terminus: ATP-dependent Clp protease proteolytic subunit (207 aa).

The active-site Nucleophile is Ser111. His136 is an active-site residue.

This sequence belongs to the peptidase S14 family. As to quaternary structure, fourteen ClpP subunits assemble into 2 heptameric rings which stack back to back to give a disk-like structure with a central cavity, resembling the structure of eukaryotic proteasomes.

It localises to the cytoplasm. It catalyses the reaction Hydrolysis of proteins to small peptides in the presence of ATP and magnesium. alpha-casein is the usual test substrate. In the absence of ATP, only oligopeptides shorter than five residues are hydrolyzed (such as succinyl-Leu-Tyr-|-NHMec, and Leu-Tyr-Leu-|-Tyr-Trp, in which cleavage of the -Tyr-|-Leu- and -Tyr-|-Trp bonds also occurs).. Its function is as follows. Cleaves peptides in various proteins in a process that requires ATP hydrolysis. Has a chymotrypsin-like activity. Plays a major role in the degradation of misfolded proteins. This chain is ATP-dependent Clp protease proteolytic subunit, found in Pectobacterium atrosepticum (strain SCRI 1043 / ATCC BAA-672) (Erwinia carotovora subsp. atroseptica).